The following is a 187-amino-acid chain: Inner membrane-spanning protein YciB (187 aa).

The next 5 helical transmembrane spans lie at 22–42 (IYVA…VTYA), 50–70 (MQLI…FFHD), 80–100 (IIYV…KSVV), 118–138 (INWA…YIAY), and 148–168 (FKVF…GVYI).

This sequence belongs to the YciB family.

The protein resides in the cell inner membrane. Plays a role in cell envelope biogenesis, maintenance of cell envelope integrity and membrane homeostasis. In Vibrio parahaemolyticus serotype O3:K6 (strain RIMD 2210633), this protein is Inner membrane-spanning protein YciB.